The sequence spans 128 residues: Small ribosomal subunit protein uS13 (128 aa).

Residues 97-128 are disordered; sequence PVRGQRTRSNARTRKGPRPSRIKTKKKKEQTV. Basic residues predominate over residues 101–128; sequence QRTRSNARTRKGPRPSRIKTKKKKEQTV.

Belongs to the universal ribosomal protein uS13 family. As to quaternary structure, part of the 30S ribosomal subunit. Forms a loose heterodimer with protein S19. Forms two bridges to the 50S subunit in the 70S ribosome.

In terms of biological role, located at the top of the head of the 30S subunit, it contacts several helices of the 16S rRNA. In the 70S ribosome it contacts the 23S rRNA (bridge B1a) and protein L5 of the 50S subunit (bridge B1b), connecting the 2 subunits; these bridges are implicated in subunit movement. Contacts the tRNAs in the A and P-sites. This is Small ribosomal subunit protein uS13 from Pseudothermotoga lettingae (strain ATCC BAA-301 / DSM 14385 / NBRC 107922 / TMO) (Thermotoga lettingae).